Here is a 203-residue protein sequence, read N- to C-terminus: Glycerol-3-phosphate acyltransferase (203 aa).

The next 4 helical transmembrane spans lie at 6 to 26, 82 to 102, 118 to 138, and 141 to 161; these read LTLLMIVAAYLAGSVSSAVLV, AISLGLIAIAACLGHIYPIFF, APIGDDLAICLMASWVVLVLI, and YSSLAAIITALLAPLYTWWLD.

The protein belongs to the PlsY family. As to quaternary structure, probably interacts with PlsX.

It is found in the cell inner membrane. It carries out the reaction an acyl phosphate + sn-glycerol 3-phosphate = a 1-acyl-sn-glycero-3-phosphate + phosphate. The protein operates within lipid metabolism; phospholipid metabolism. Catalyzes the transfer of an acyl group from acyl-phosphate (acyl-PO(4)) to glycerol-3-phosphate (G3P) to form lysophosphatidic acid (LPA). This enzyme utilizes acyl-phosphate as fatty acyl donor, but not acyl-CoA or acyl-ACP. The polypeptide is Glycerol-3-phosphate acyltransferase (Shewanella sp. (strain MR-4)).